The sequence spans 486 residues: Cardiolipin synthase A (486 aa).

2 helical membrane passes run 3 to 23 (TFYT…IAGV) and 38 to 58 (MAWL…YLSF). PLD phosphodiesterase domains lie at 219–246 (MDLR…VDPR) and 399–426 (EGGL…DMRS). Residues His224, Lys226, Asp231, His404, Lys406, and Asp411 contribute to the active site.

It belongs to the phospholipase D family. Cardiolipin synthase subfamily. ClsA sub-subfamily.

It is found in the cell inner membrane. It carries out the reaction 2 a 1,2-diacyl-sn-glycero-3-phospho-(1'-sn-glycerol) = a cardiolipin + glycerol. Catalyzes the reversible phosphatidyl group transfer from one phosphatidylglycerol molecule to another to form cardiolipin (CL) (diphosphatidylglycerol) and glycerol. The polypeptide is Cardiolipin synthase A (Yersinia pseudotuberculosis serotype IB (strain PB1/+)).